Here is a 408-residue protein sequence, read N- to C-terminus: Neutral cholesterol ester hydrolase 1 (408 aa).

Residues 1–4 (MRSS) lie on the Cytoplasmic side of the membrane. The helical; Signal-anchor for type II membrane protein transmembrane segment at 5 to 25 (CVLLAALLALVAYYVYIPLPS) threads the bilayer. The Lumenal segment spans residues 26-408 (AVSDPWKLML…SYFKWLDQNL (383 aa)). The Involved in the stabilization of the negatively charged intermediate by the formation of the oxyanion hole motif lies at 113–115 (HGG). Ser191 is an active-site residue. The N-linked (GlcNAc...) asparagine glycan is linked to Asn270. Asp348 is an active-site residue. Asn367 carries an N-linked (GlcNAc...) asparagine glycan. His378 is a catalytic residue. N-linked (GlcNAc...) asparagine glycosylation is present at Asn389.

This sequence belongs to the 'GDXG' lipolytic enzyme family. Post-translationally, N-glycosylated.

It localises to the cell membrane. The protein resides in the microsome. The enzyme catalyses a 1-O-alkyl-2-acetyl-sn-glycerol + H2O = a 1-O-alkyl-sn-glycerol + acetate + H(+). The catalysed reaction is 1-O-hexadecyl-2-acetyl-sn-glycerol + H2O = 1-O-hexadecyl-sn-glycerol + acetate + H(+). It catalyses the reaction a cholesterol ester + H2O = cholesterol + a fatty acid + H(+). It carries out the reaction cholesteryl (9Z-octadecenoate) + H2O = cholesterol + (9Z)-octadecenoate + H(+). Its function is as follows. Hydrolyzes 2-acetyl monoalkylglycerol ether (1-O-alkyl-2-acetyl-sn-glycerol), the penultimate precursor of the pathway for de novo synthesis of platelet-activating factor. May be responsible for the hydrolysis of cholesterol esters (such as cholesteryl (9Z-octadecenoate)) in macrophages. Also involved in organ detoxification by hydrolyzing exogenous organophosphorus compounds. In Rattus norvegicus (Rat), this protein is Neutral cholesterol ester hydrolase 1 (Nceh1).